The sequence spans 220 residues: Fructose-6-phosphate aldolase (220 aa).

Lys-85 serves as the catalytic Schiff-base intermediate with substrate.

This sequence belongs to the transaldolase family. Type 3A subfamily. As to quaternary structure, homodecamer.

It localises to the cytoplasm. The catalysed reaction is beta-D-fructose 6-phosphate = dihydroxyacetone + D-glyceraldehyde 3-phosphate. Catalyzes the reversible formation of fructose 6-phosphate from dihydroxyacetone and D-glyceraldehyde 3-phosphate via an aldolization reaction. The polypeptide is Fructose-6-phosphate aldolase (Salmonella arizonae (strain ATCC BAA-731 / CDC346-86 / RSK2980)).